The chain runs to 995 residues: Integrator complex subunit 8 (995 aa).

Residue Thr-18 is modified to Phosphothreonine. The short motif at 24–29 (WFEFLL) is the WFEF motif element. 4 TPR repeats span residues 250–288 (CQVC…LAEI), 320–356 (SQQL…TLPV), 570–603 (VYIL…VTEF), and 833–866 (HAWL…CSDF).

It belongs to the Integrator subunit 8 family. Component of the Integrator complex, composed of core subunits INTS1, INTS2, INTS3, INTS4, INTS5, INTS6, INTS7, INTS8, INTS9/RC74, INTS10, INTS11/CPSF3L, INTS12, INTS13, INTS14 and INTS15. The core complex associates with protein phosphatase 2A subunits PPP2CA and PPP2R1A, to form the Integrator-PP2A (INTAC) complex.

The protein resides in the nucleus. It is found in the chromosome. Its function is as follows. Component of the integrator complex, a multiprotein complex that terminates RNA polymerase II (Pol II) transcription in the promoter-proximal region of genes. The integrator complex provides a quality checkpoint during transcription elongation by driving premature transcription termination of transcripts that are unfavorably configured for transcriptional elongation: the complex terminates transcription by (1) catalyzing dephosphorylation of the C-terminal domain (CTD) of Pol II subunit POLR2A/RPB1 and SUPT5H/SPT5, (2) degrading the exiting nascent RNA transcript via endonuclease activity and (3) promoting the release of Pol II from bound DNA. The integrator complex is also involved in terminating the synthesis of non-coding Pol II transcripts, such as enhancer RNAs (eRNAs), small nuclear RNAs (snRNAs), telomerase RNAs and long non-coding RNAs (lncRNAs). Within the integrator complex, INTS8 is required for the recruitment of protein phosphatase 2A (PP2A) to transcription pause-release checkpoint. The chain is Integrator complex subunit 8 (Ints8) from Mus musculus (Mouse).